Consider the following 174-residue polypeptide: Gamma-crystallin C (174 aa).

Beta/gamma crystallin 'Greek key' domains follow at residues 2–40 (GKIT…RVDS) and 41–83 (GCWM…CLIS). An S-methylcysteine modification is found at Cys-23. Residues 84–87 (DTSS) are connecting peptide. Beta/gamma crystallin 'Greek key' domains are found at residues 88–128 (HRLR…HVLE) and 129–171 (GCWV…RRVV).

Belongs to the beta/gamma-crystallin family.

Functionally, crystallins are the dominant structural components of the vertebrate eye lens. The polypeptide is Gamma-crystallin C (CRYGC) (Bos taurus (Bovine)).